The chain runs to 134 residues: Fluoride-specific ion channel FluC 3 (134 aa).

4 consecutive transmembrane segments (helical) span residues 4-24 (LIIL…FIML), 35-55 (MDIF…TSFF), 67-87 (MVGT…FGAV), and 100-120 (ICYL…GLMI). Na(+) is bound by residues glycine 74 and serine 77.

It belongs to the fluoride channel Fluc/FEX (TC 1.A.43) family.

It localises to the cell inner membrane. The catalysed reaction is fluoride(in) = fluoride(out). Na(+) is not transported, but it plays an essential structural role and its presence is essential for fluoride channel function. Functionally, fluoride-specific ion channel. Important for reducing fluoride concentration in the cell, thus reducing its toxicity. This Yersinia pseudotuberculosis serotype I (strain IP32953) protein is Fluoride-specific ion channel FluC 3.